The chain runs to 871 residues: Translation initiation factor IF-2 (871 aa).

Disordered stretches follow at residues 60-101 (KKNI…QEVK) and 184-203 (ESLK…KKES). A compositionally biased stretch (basic residues) spans 61 to 72 (KNIKTPTAKKPK). Basic and acidic residues predominate over residues 73–101 (KENIKEQEKLNESEKKEPKKEEKLKQEVK). A tr-type G domain is found at 370 to 537 (TRAPVITIMG…IVLLQADILE (168 aa)). Residues 379–386 (GHVDHGKT) are G1. 379–386 (GHVDHGKT) serves as a coordination point for GTP. The G2 stretch occupies residues 404–408 (GITQH). Residues 425 to 428 (DTPG) form a G3 region. GTP contacts are provided by residues 425–429 (DTPGH) and 479–482 (NKMD). A G4 region spans residues 479-482 (NKMD). Positions 515-517 (SAK) are G5.

It belongs to the TRAFAC class translation factor GTPase superfamily. Classic translation factor GTPase family. IF-2 subfamily.

The protein resides in the cytoplasm. Functionally, one of the essential components for the initiation of protein synthesis. Protects formylmethionyl-tRNA from spontaneous hydrolysis and promotes its binding to the 30S ribosomal subunits. Also involved in the hydrolysis of GTP during the formation of the 70S ribosomal complex. The protein is Translation initiation factor IF-2 of Campylobacter jejuni subsp. jejuni serotype O:6 (strain 81116 / NCTC 11828).